Reading from the N-terminus, the 495-residue chain is Probable polyamine transporter At1g31830 (495 aa).

11 helical membrane-spanning segments follow: residues 49–69 (VSMLPLVFLIFYEVSGGPFGV), 79–99 (LLALLGFVIFPFIWSIPEALI), 112–132 (GYVVWVSSALGPFWGFQQGWM), 156–176 (VPALGSGLPRVASILVLTILL), 186–206 (IVGWVAVLMGVFSILPFAVMG), 230–250 (LYLNTLFWNLNYWDSISTLAG), 267–287 (VILVACSYIFPLLAGIGAIPL), 357–377 (TPLLGILFSASGVVLLSWLSF), 380–400 (IVAAENLLYCVGMILEFIAFV), 417–437 (IGTTGSILMCIPPTILICAVV), and 442–462 (LKVAAVSIVMMIIGFLIHPLL).

Belongs to the amino acid-polyamine-organocation (APC) superfamily. Polyamine:cation symporter (PHS) (TC 2.A.3.12) family.

The protein localises to the cell membrane. Functionally, probable cell membrane polyamine/proton symporter involved in the polyamine uptake in cells. This chain is Probable polyamine transporter At1g31830, found in Arabidopsis thaliana (Mouse-ear cress).